Here is a 410-residue protein sequence, read N- to C-terminus: Sprouty-related, EVH1 domain-containing protein 2 (410 aa).

One can recognise a WH1 domain in the interval 5–122 (THPDDDSYIV…RGVRKAIEDL (118 aa)). Residues 127-171 (TTSSSTLHNEAELGDDDVFTTATDSSSNSSQKREPTTRTISSPTS) form a disordered region. The segment covering 146–156 (TTATDSSSNSS) has biased composition (polar residues). The 56-residue stretch at 197–252 (SYPQVTFPEDDEEIVRINPREKIWMTGYEDYRHAPVRGKYLDTTEDADSYVRFAKG) folds into the KBD domain. A phosphotyrosine mark is found at tyrosine 224 and tyrosine 227. Residues 274–294 (DPKGSVIKTQPPRAKSRRRKE) are disordered. One can recognise an SPR domain in the interval 300 to 408 (RCVYCRDMFN…CRCCGGKHKA (109 aa)).

Homodimer and heterodimer. Able to interact with SPRED1 to form heterodimers. Interacts with RAS. May interact with ZDHHC13 (via ANK repeats) and ZDHHC17 (via ANK repeats). Interacts with TESK1. Interacts with NF1. In terms of processing, phosphorylated on serine and threonine residues. Phosphorylated on tyrosine. Phosphorylation of Tyr-224 and Tyr-227 are required for ubiquitination. Ubiquitinated; leading to degradation by the proteasome. Predominantly expressed in lung, liver and testis. In testis, it is specially found in mature spermatids projecting into the lumen of the seminiferous. Strongly expressed in glandular epithelia. Also expressed in embryonic tissues such as heart, lung, liver and brain.

The protein localises to the cell membrane. Its subcellular location is the cytoplasmic vesicle. The protein resides in the secretory vesicle membrane. It is found in the cytoplasm. Functionally, negatively regulates Ras signaling pathways and downstream activation of MAP kinases. Recruits and translocates NF1 to the cell membrane, thereby enabling NF1-dependent hydrolysis of active GTP-bound Ras to inactive GDP-bound Ras. Inhibits fibroblast growth factor (FGF)-induced retinal lens fiber differentiation, probably by inhibiting FGF-mediated phosphorylation of ERK1/2. Inhibits TGFB-induced epithelial-to-mesenchymal transition in lens epithelial cells. The sequence is that of Sprouty-related, EVH1 domain-containing protein 2 (Spred2) from Mus musculus (Mouse).